We begin with the raw amino-acid sequence, 90 residues long: Small ribosomal subunit protein bS16 (90 aa).

This sequence belongs to the bacterial ribosomal protein bS16 family.

The chain is Small ribosomal subunit protein bS16 from Lysinibacillus sphaericus (strain C3-41).